The primary structure comprises 1076 residues: DNA-directed RNA polymerase subunit beta (1076 aa).

This sequence belongs to the RNA polymerase beta chain family. In plastids the minimal PEP RNA polymerase catalytic core is composed of four subunits: alpha, beta, beta', and beta''. When a (nuclear-encoded) sigma factor is associated with the core the holoenzyme is formed, which can initiate transcription.

It is found in the plastid. It localises to the chloroplast. The catalysed reaction is RNA(n) + a ribonucleoside 5'-triphosphate = RNA(n+1) + diphosphate. DNA-dependent RNA polymerase catalyzes the transcription of DNA into RNA using the four ribonucleoside triphosphates as substrates. The protein is DNA-directed RNA polymerase subunit beta of Triticum aestivum (Wheat).